The following is a 164-amino-acid chain: R-phycoerythrin alpha chain (164 aa).

Residues asparagine 47, lysine 81, cysteine 82, arginine 84, histidine 88, arginine 137, cysteine 139, and arginine 142 each coordinate (2R,3E)-phycoerythrobilin.

Belongs to the phycobiliprotein family. Heterododecamer of 6 alpha and 6 beta chains. The basic functional unit of phycobiliproteins is a ring-shaped hexamer formed from two back-to-back trimers contacting via the alpha chain subunits. The trimers are composed of alpha/beta subunit heterodimers arranged around a three-fold axis of symmetry. The phycoerythrins also contain a gamma subunit which is located in the center of the hexamer. Post-translationally, contains two covalently linked phycoerythrobilin chromophores.

It is found in the plastid. It localises to the chloroplast thylakoid membrane. Its function is as follows. Light-harvesting photosynthetic tetrapyrrole chromophore-protein from the phycobiliprotein complex. This Agarophyton chilense (Red seaweed) protein is R-phycoerythrin alpha chain (rpeA).